The primary structure comprises 381 residues: Orotidine 5'-phosphate decarboxylase (381 aa).

Residues Asp-42, 64-66 (KTH), 99-108 (DRKFGDIGHT), Tyr-333, and Arg-352 each bind substrate. Lys-101 acts as the Proton donor in catalysis. Residues 311–333 (LPPEDEDQQTNGSVGGDGQGQQY) form a disordered region.

Belongs to the OMP decarboxylase family.

It catalyses the reaction orotidine 5'-phosphate + H(+) = UMP + CO2. It participates in pyrimidine metabolism; UMP biosynthesis via de novo pathway; UMP from orotate: step 2/2. This Hypocrea jecorina (Trichoderma reesei) protein is Orotidine 5'-phosphate decarboxylase (ura3).